A 254-amino-acid polypeptide reads, in one-letter code: Hydroxyacylglutathione hydrolase (254 aa).

Zn(2+) is bound by residues histidine 53, histidine 55, aspartate 57, histidine 58, histidine 111, aspartate 128, and histidine 166.

It belongs to the metallo-beta-lactamase superfamily. Glyoxalase II family. Monomer. It depends on Zn(2+) as a cofactor.

It catalyses the reaction an S-(2-hydroxyacyl)glutathione + H2O = a 2-hydroxy carboxylate + glutathione + H(+). It functions in the pathway secondary metabolite metabolism; methylglyoxal degradation; (R)-lactate from methylglyoxal: step 2/2. Functionally, thiolesterase that catalyzes the hydrolysis of S-D-lactoyl-glutathione to form glutathione and D-lactic acid. This is Hydroxyacylglutathione hydrolase from Aeromonas salmonicida (strain A449).